A 513-amino-acid polypeptide reads, in one-letter code: 2-isopropylmalate synthase (513 aa).

One can recognise a Pyruvate carboxyltransferase domain in the interval Leu-5–Val-268. Positions 14, 202, 204, and 239 each coordinate Mn(2+). The interval Arg-394–Ile-513 is regulatory domain.

Belongs to the alpha-IPM synthase/homocitrate synthase family. LeuA type 1 subfamily. Homodimer. Requires Mn(2+) as cofactor.

It localises to the cytoplasm. It carries out the reaction 3-methyl-2-oxobutanoate + acetyl-CoA + H2O = (2S)-2-isopropylmalate + CoA + H(+). Its pathway is amino-acid biosynthesis; L-leucine biosynthesis; L-leucine from 3-methyl-2-oxobutanoate: step 1/4. In terms of biological role, catalyzes the condensation of the acetyl group of acetyl-CoA with 3-methyl-2-oxobutanoate (2-ketoisovalerate) to form 3-carboxy-3-hydroxy-4-methylpentanoate (2-isopropylmalate). The chain is 2-isopropylmalate synthase from Cupriavidus necator (strain ATCC 17699 / DSM 428 / KCTC 22496 / NCIMB 10442 / H16 / Stanier 337) (Ralstonia eutropha).